The sequence spans 455 residues: MKLNLFILGLLTLAAHAYALVARDKLLLPHEDPFFQPPDGWQDKEVGTILRSRKVTIKTLVKDNLKEAWQLLYRTTYTSDDEPTTTVTTVMVPHNAQNDSLVLFADFEDSSADRCAPSYSWRAGSLDDPSASTRVAIAMLYLQEGYIVTMPDKEGNRGAFGSGHVEGRQSLDGIRATLAFDKLGLSKDTRVAGHGYSGGGIQIGWAASLKKTYAPELNVVGWSAGGVPSNLTALIEKINGSPFAGFVVAGLTGVSSTYPEVKEYMEKVFTKQGLEDMEFPKKFCSTGIVLRFLFKDFFAKDFSKVGDRYLYEPVVRNILEKLTMGTNPDYTPDAPMLLMQAKNDEVAPYEAVKKTYDSWCQEGAQVHLVTLNNPLSSHASTTVTSSLPGFLWVRDRLQGKLAESGCHENKNFDVGINTNALGEDFKGILGILQGFLGDKIGPNDEYLIDWFKKHK.

The signal sequence occupies residues 1–19 (MKLNLFILGLLTLAAHAYA). An N-linked (GlcNAc...) asparagine glycan is attached at Asn98. Cysteines 115 and 284 form a disulfide. Catalysis depends on Ser197, which acts as the Nucleophile. Asn230 is a glycosylation site (N-linked (GlcNAc...) asparagine). Active-site residues include Asp344 and His378. Cysteines 360 and 406 form a disulfide.

Belongs to the AB hydrolase superfamily. Lipase family. Class Lip subfamily.

It is found in the secreted. It localises to the cell wall. It carries out the reaction a triacylglycerol + H2O = a diacylglycerol + a fatty acid + H(+). The enzyme catalyses a monoacylglycerol + H2O = glycerol + a fatty acid + H(+). It catalyses the reaction a diacylglycerol + H2O = a monoacylglycerol + a fatty acid + H(+). In terms of biological role, secreted lipase involved in Dandruff and seborrheic dermatitis (D/SD) probably via lipase-mediated breakdown of sebaceous lipids and release of irritating free fatty acids. Has triacylglycerol lipase activity and is able to hydrolyze triolein. Mostly converts monoolein to di- and triolein, while free fatty acids are only produced in low amounts. The chain is Secreted triacylglycerol lipase LIP4 from Malassezia globosa (strain ATCC MYA-4612 / CBS 7966) (Dandruff-associated fungus).